We begin with the raw amino-acid sequence, 126 residues long: Fatty acid-binding protein 10-A, liver basic (126 aa).

Positions 57, 77, 99, and 101 each coordinate cholate.

Belongs to the calycin superfamily. Fatty-acid binding protein (FABP) family. Expressed in the developing embryonic liver from 48 hpf. Also expressed in the liver of 5-day-old larvae. In adults, primarily expressed in the liver, with weak expression in the testis and intestine.

It localises to the cytoplasm. Its function is as follows. Binds hydrophobic ligands, such as cholate, in the cytoplasm. May be involved in intracellular lipid transport. Binds one cholate per subunit. The polypeptide is Fatty acid-binding protein 10-A, liver basic (fabp10a) (Danio rerio (Zebrafish)).